The chain runs to 555 residues: Potassium-transporting ATPase potassium-binding subunit (555 aa).

The next 10 helical transmembrane spans lie at 2-22 (IWVA…PTGI), 60-80 (QYAL…YFIF), 130-150 (IGIT…VMAF), 173-193 (VFLP…VPQT), 246-266 (MSNI…PFTY), 278-298 (ILFV…TTSE), 374-394 (AGFV…GLMV), 412-432 (LIAV…ALAL), 483-503 (LVMF…AASL), and 525-545 (GIFI…MLVL).

The protein belongs to the KdpA family. In terms of assembly, the system is composed of three essential subunits: KdpA, KdpB and KdpC.

It localises to the cell membrane. Part of the high-affinity ATP-driven potassium transport (or Kdp) system, which catalyzes the hydrolysis of ATP coupled with the electrogenic transport of potassium into the cytoplasm. This subunit binds the extracellular potassium ions and delivers the ions to the membrane domain of KdpB through an intramembrane tunnel. The polypeptide is Potassium-transporting ATPase potassium-binding subunit (Bacillus thuringiensis subsp. konkukian (strain 97-27)).